Consider the following 853-residue polypeptide: DNA mismatch repair protein MutS (853 aa).

ATP is bound at residue 614 to 621 (GPNMGGKS).

It belongs to the DNA mismatch repair MutS family.

Functionally, this protein is involved in the repair of mismatches in DNA. It is possible that it carries out the mismatch recognition step. This protein has a weak ATPase activity. This Escherichia coli O7:K1 (strain IAI39 / ExPEC) protein is DNA mismatch repair protein MutS.